Here is a 184-residue protein sequence, read N- to C-terminus: Bifunctional protein PyrR (184 aa).

The PRPP-binding signature appears at 105 to 117 (VVMVDDVLFTGRT).

Belongs to the purine/pyrimidine phosphoribosyltransferase family. PyrR subfamily.

It catalyses the reaction UMP + diphosphate = 5-phospho-alpha-D-ribose 1-diphosphate + uracil. In terms of biological role, regulates the transcription of the pyrimidine nucleotide (pyr) operon in response to exogenous pyrimidines. Its function is as follows. Also displays a weak uracil phosphoribosyltransferase activity which is not physiologically significant. This is Bifunctional protein PyrR from Rubrobacter xylanophilus (strain DSM 9941 / JCM 11954 / NBRC 16129 / PRD-1).